Consider the following 339-residue polypeptide: Sperm acrosome membrane-associated protein 6 (339 aa).

Residues 1-41 (MTSQRSLSSPQTRRPSVMGLISLVGSIVLLFLLIFRASTWA) form the signal peptide. Positions 42-45 (CLFC) match the CXXC motif motif. Intrachain disulfides connect cysteine 42-cysteine 155, cysteine 45-cysteine 158, cysteine 56-cysteine 70, cysteine 140-cysteine 163, cysteine 144-cysteine 169, and cysteine 186-cysteine 241. Residues 42–310 (CLFCFTTYEE…NPQALTLGNL (269 aa)) lie on the Extracellular side of the membrane. The short motif at 155–158 (CSGC) is the CXXC motif element. The region spanning 166–251 (PLDCPVQDML…VILHDQRPLA (86 aa)) is the Ig-like domain. A glycan (N-linked (GlcNAc...) asparagine) is linked at asparagine 258. Residues 311–331 (FLLAATAALGSASVTLLVWLF) form a helical membrane-spanning segment. Topologically, residues 332 to 339 (FRWYLSGN) are cytoplasmic.

This sequence belongs to the SPACA6 family. In terms of assembly, forms a complex with IZUMO1 and TMEM81 on spermatocyte cell membrane required for fertilization. As to expression, highly expressed in testis. Minor expression also detected in epididymis, seminal vesicle and ovary. Predominantly expressed in testicular germ cells during spermiogenesis. Most abundant in round spermatids and detected at lower levels in elongating spermatids.

It localises to the cytoplasmic vesicle. It is found in the secretory vesicle. The protein resides in the acrosome membrane. Functionally, sperm protein required for fusion of sperm with the egg membrane during fertilization. May regulate the expression of sperm surface protein DCST2. The polypeptide is Sperm acrosome membrane-associated protein 6 (Mus musculus (Mouse)).